We begin with the raw amino-acid sequence, 307 residues long: MATH domain and coiled-coil domain-containing protein At3g58380 (307 aa).

Positions 6 to 132 (DKKFVWVIKD…CREITIVIEV (127 aa)) constitute an MATH domain. The stretch at 238 to 290 (KVDWLEKKLKEVKEKKKNVDNGKARLQQIEEDLQKLNQKRLDLKDILDKEKAN) forms a coiled coil.

In Arabidopsis thaliana (Mouse-ear cress), this protein is MATH domain and coiled-coil domain-containing protein At3g58380.